We begin with the raw amino-acid sequence, 86 residues long: UPF0213 protein OB0043 (86 aa).

The GIY-YIG domain maps to Glu3 to Ile80.

The protein belongs to the UPF0213 family.

This Oceanobacillus iheyensis (strain DSM 14371 / CIP 107618 / JCM 11309 / KCTC 3954 / HTE831) protein is UPF0213 protein OB0043.